Reading from the N-terminus, the 295-residue chain is Protoheme IX farnesyltransferase (295 aa).

The next 9 helical transmembrane spans lie at 9-29, 36-56, 80-100, 108-128, 135-155, 163-183, 209-229, 230-250, and 265-285; these read ITKP…FFLA, FGVF…GCVF, LVSL…GVAL, LAAL…SLYL, GTLV…CAVT, LTLL…IAIF, IMLY…GGYA, GLNY…MAWK, and FVFS…DFQV.

This sequence belongs to the UbiA prenyltransferase family. Protoheme IX farnesyltransferase subfamily.

Its subcellular location is the cell inner membrane. It carries out the reaction heme b + (2E,6E)-farnesyl diphosphate + H2O = Fe(II)-heme o + diphosphate. It participates in porphyrin-containing compound metabolism; heme O biosynthesis; heme O from protoheme: step 1/1. Converts heme B (protoheme IX) to heme O by substitution of the vinyl group on carbon 2 of heme B porphyrin ring with a hydroxyethyl farnesyl side group. This chain is Protoheme IX farnesyltransferase, found in Pseudomonas savastanoi pv. phaseolicola (strain 1448A / Race 6) (Pseudomonas syringae pv. phaseolicola (strain 1448A / Race 6)).